Here is a 119-residue protein sequence, read N- to C-terminus: Evasin P983 (119 aa).

The signal sequence occupies residues Met-1–Ala-21. 4 cysteine pairs are disulfide-bonded: Cys-37–Cys-59, Cys-55–Cys-97, Cys-72–Cys-102, and Cys-92–Cys-111. 2 N-linked (GlcNAc...) asparagine glycosylation sites follow: Asn-48 and Asn-67.

The protein resides in the secreted. Its function is as follows. Salivary chemokine-binding protein which binds to host chemokines CCL2, CCL3 and CCL8. This is Evasin P983 from Amblyomma cajennense (Cayenne tick).